Here is a 305-residue protein sequence, read N- to C-terminus: Ribonuclease BN (305 aa).

Zn(2+)-binding residues include H64, H66, D68, H69, H141, D212, and H270. The active-site Proton acceptor is the D68.

The protein belongs to the RNase Z family. RNase BN subfamily. Homodimer. It depends on Zn(2+) as a cofactor.

Zinc phosphodiesterase, which has both exoribonuclease and endoribonuclease activities. The sequence is that of Ribonuclease BN from Escherichia coli O139:H28 (strain E24377A / ETEC).